We begin with the raw amino-acid sequence, 340 residues long: Coproporphyrin III ferrochelatase (340 aa).

Residues serine 52 and tyrosine 121 each coordinate Fe-coproporphyrin III. Histidine 181 and glutamate 264 together coordinate Fe(2+).

Belongs to the ferrochelatase family.

The protein localises to the cytoplasm. The enzyme catalyses Fe-coproporphyrin III + 2 H(+) = coproporphyrin III + Fe(2+). Its pathway is porphyrin-containing compound metabolism; protoheme biosynthesis. Functionally, involved in coproporphyrin-dependent heme b biosynthesis. Catalyzes the insertion of ferrous iron into coproporphyrin III to form Fe-coproporphyrin III. This Mycolicibacterium smegmatis (strain ATCC 700084 / mc(2)155) (Mycobacterium smegmatis) protein is Coproporphyrin III ferrochelatase.